The following is a 492-amino-acid chain: Glutamyl-tRNA(Gln) amidotransferase subunit A (492 aa).

Catalysis depends on charge relay system residues lysine 79 and serine 154. The active-site Acyl-ester intermediate is serine 178.

It belongs to the amidase family. GatA subfamily. In terms of assembly, heterotrimer of A, B and C subunits.

The catalysed reaction is L-glutamyl-tRNA(Gln) + L-glutamine + ATP + H2O = L-glutaminyl-tRNA(Gln) + L-glutamate + ADP + phosphate + H(+). Its function is as follows. Allows the formation of correctly charged Gln-tRNA(Gln) through the transamidation of misacylated Glu-tRNA(Gln) in organisms which lack glutaminyl-tRNA synthetase. The reaction takes place in the presence of glutamine and ATP through an activated gamma-phospho-Glu-tRNA(Gln). The chain is Glutamyl-tRNA(Gln) amidotransferase subunit A from Acinetobacter baumannii (strain ACICU).